We begin with the raw amino-acid sequence, 223 residues long: MAEVKLLGFWYSPFTHRVEWALKLKGVKYEYIEEDRDNKSSLLLQSNPVHKKVPVLIHNGKPIVESMVILEYIDETFEGPSILPKDPYDRALARFWSKFLGDKVAAVVNTFFRKGEEQEKGKEEVYEMLKVLDNELKDKKFFVGDKFGFADIAANLVGFWLGVFEEGYGVVLVTSEKFPNFSRWRDEYINCSQVKESLPSRDELLAFFRARFQAVVASISAPK.

In terms of domain architecture, GST N-terminal spans 2 to 81 (AEVKLLGFWY…YIDETFEGPS (80 aa)). Residues Ser12, Lys39, Val53, and 65 to 66 (ES) contribute to the glutathione site. The GST C-terminal domain occupies 86 to 212 (DPYDRALARF…ELLAFFRARF (127 aa)).

The protein belongs to the GST superfamily. HSP26 family. In terms of tissue distribution, root tip-specific expression.

The enzyme catalyses RX + glutathione = an S-substituted glutathione + a halide anion + H(+). This is Probable glutathione S-transferase from Nicotiana tabacum (Common tobacco).